Consider the following 393-residue polypeptide: MTTYNNKGPKPERGRFLHFHSVTFWVGNAKQAASFYCNKMGFEPLAYRGLETGSREVVSHVIKQGKIVFVLCSALNPWNKEMGDHLVKHGDGVKDIAFEVEDCDHIVQKARERGAKIVREPWVEQDKFGKVKFAVLQTYGDTTHTLVEKINYTGRFLPGFEAPTYKDTLLPKLPRCNLEIIDHIVGNQPDQEMQSASEWYLKNLQFHRFWSVDDTQVHTEYSSLRSIVVTNYEESIKMPINEPAPGRKKSQIQEYVDYNGGAGVQHIALKTEDIITAIRHLRERGTEFLAAPSSYYKLLRENLKSAKIQVKESMDVLEELHILVDYDEKGYLLQIFTKPMQDRPTLFLEVIQRHNHQGFGAGNFNSLFKAFEEEQALRGNLTDLEPNGVRSGM.

Threonine 2 is modified (N-acetylthreonine). VOC domains lie at 18–149 and 180–338; these read HFHS…LVEK and IIDH…IFTK. Residue lysine 132 is modified to N6-succinyllysine. Histidine 183 is a binding site for Fe cation. 3 positions are modified to phosphoserine: serine 211, serine 226, and serine 250. 2 residues coordinate Fe cation: histidine 266 and glutamate 349.

Belongs to the 4HPPD family. Homodimer. It depends on Fe cation as a cofactor.

It localises to the cytoplasm. The protein localises to the endoplasmic reticulum membrane. It is found in the golgi apparatus membrane. The catalysed reaction is 3-(4-hydroxyphenyl)pyruvate + O2 = homogentisate + CO2. It participates in amino-acid degradation; L-phenylalanine degradation; acetoacetate and fumarate from L-phenylalanine: step 3/6. In terms of biological role, catalyzes the conversion of 4-hydroxyphenylpyruvic acid to homogentisic acid, one of the steps in tyrosine catabolism. The polypeptide is 4-hydroxyphenylpyruvate dioxygenase (Hpd) (Mus musculus (Mouse)).